Reading from the N-terminus, the 114-residue chain is Progonadoliberin-2 (114 aa).

The first 24 residues, 1 to 24, serve as a signal peptide directing secretion; that stretch reads MASSRRGLLLLLMLLTAHPGPSEA. Gly-34 bears the Glycine amide mark. A disordered region spans residues 35-59; sequence GKRALSSAQDPQNALRPPAGSPAQA.

This sequence belongs to the GnRH family.

The protein localises to the secreted. Stimulates the secretion of gonadotropins; it stimulates the secretion of both luteinizing and follicle-stimulating hormones. In Macaca mulatta (Rhesus macaque), this protein is Progonadoliberin-2 (GNRH2).